The following is a 415-amino-acid chain: 3-isopropylmalate dehydratase large subunit (415 aa).

Positions 295, 353, and 356 each coordinate [4Fe-4S] cluster.

This sequence belongs to the aconitase/IPM isomerase family. LeuC type 2 subfamily. As to quaternary structure, heterodimer of LeuC and LeuD. [4Fe-4S] cluster is required as a cofactor.

It carries out the reaction (2R,3S)-3-isopropylmalate = (2S)-2-isopropylmalate. The protein operates within amino-acid biosynthesis; L-leucine biosynthesis; L-leucine from 3-methyl-2-oxobutanoate: step 2/4. In terms of biological role, catalyzes the isomerization between 2-isopropylmalate and 3-isopropylmalate, via the formation of 2-isopropylmaleate. In Pyrobaculum neutrophilum (strain DSM 2338 / JCM 9278 / NBRC 100436 / V24Sta) (Thermoproteus neutrophilus), this protein is 3-isopropylmalate dehydratase large subunit.